Consider the following 158-residue polypeptide: 2-C-methyl-D-erythritol 2,4-cyclodiphosphate synthase (158 aa).

The a divalent metal cation site is built by Asp-8 and His-10. 4-CDP-2-C-methyl-D-erythritol 2-phosphate is bound by residues 8–10 (DVH) and 34–35 (HS). His-42 provides a ligand contact to a divalent metal cation. Residues 56 to 58 (DIG), 132 to 135 (TTNE), and Arg-142 each bind 4-CDP-2-C-methyl-D-erythritol 2-phosphate.

Belongs to the IspF family. As to quaternary structure, homotrimer. A divalent metal cation serves as cofactor.

The enzyme catalyses 4-CDP-2-C-methyl-D-erythritol 2-phosphate = 2-C-methyl-D-erythritol 2,4-cyclic diphosphate + CMP. It participates in isoprenoid biosynthesis; isopentenyl diphosphate biosynthesis via DXP pathway; isopentenyl diphosphate from 1-deoxy-D-xylulose 5-phosphate: step 4/6. Involved in the biosynthesis of isopentenyl diphosphate (IPP) and dimethylallyl diphosphate (DMAPP), two major building blocks of isoprenoid compounds. Catalyzes the conversion of 4-diphosphocytidyl-2-C-methyl-D-erythritol 2-phosphate (CDP-ME2P) to 2-C-methyl-D-erythritol 2,4-cyclodiphosphate (ME-CPP) with a corresponding release of cytidine 5-monophosphate (CMP). The protein is 2-C-methyl-D-erythritol 2,4-cyclodiphosphate synthase of Chlorobium phaeobacteroides (strain DSM 266 / SMG 266 / 2430).